The sequence spans 622 residues: 1-deoxy-D-xylulose-5-phosphate synthase (622 aa).

Thiamine diphosphate contacts are provided by residues His71 and 112–114 (GHS). Position 143 (Asp143) interacts with Mg(2+). Thiamine diphosphate contacts are provided by residues 144–145 (GA), Asn172, Tyr283, and Glu363. Asn172 contributes to the Mg(2+) binding site.

Belongs to the transketolase family. DXPS subfamily. Homodimer. The cofactor is Mg(2+). Thiamine diphosphate serves as cofactor.

The catalysed reaction is D-glyceraldehyde 3-phosphate + pyruvate + H(+) = 1-deoxy-D-xylulose 5-phosphate + CO2. It participates in metabolic intermediate biosynthesis; 1-deoxy-D-xylulose 5-phosphate biosynthesis; 1-deoxy-D-xylulose 5-phosphate from D-glyceraldehyde 3-phosphate and pyruvate: step 1/1. Its function is as follows. Catalyzes the acyloin condensation reaction between C atoms 2 and 3 of pyruvate and glyceraldehyde 3-phosphate to yield 1-deoxy-D-xylulose-5-phosphate (DXP). The polypeptide is 1-deoxy-D-xylulose-5-phosphate synthase (Caldanaerobacter subterraneus subsp. tengcongensis (strain DSM 15242 / JCM 11007 / NBRC 100824 / MB4) (Thermoanaerobacter tengcongensis)).